The following is a 215-amino-acid chain: MLEMTEAVASAAHSVFGDRLPLAQRYVEHLATSGIERGLIGPREVPRLWDRHVLNCAVVVELIEIDATVADVGSGAGLPGLCLALARPDLSITLIEPLERRVTWLSEVVADLGLSDQVTLFRMRAEQAVDEVNCSVVTARAVSALDKLAGLTIPLLHGNGQFLAVKGRSAAEEITKAAKAVRKLGGTRTDVLVAGSSVLEEPTTVVRILVGSAHR.

S-adenosyl-L-methionine-binding positions include glycine 73, leucine 78, 125–126 (AE), and arginine 140.

Belongs to the methyltransferase superfamily. RNA methyltransferase RsmG family.

It is found in the cytoplasm. In terms of biological role, specifically methylates the N7 position of guanine in position 518 of 16S rRNA. The polypeptide is Ribosomal RNA small subunit methyltransferase G (Renibacterium salmoninarum (strain ATCC 33209 / DSM 20767 / JCM 11484 / NBRC 15589 / NCIMB 2235)).